The sequence spans 479 residues: 6-phosphogluconate dehydrogenase, decarboxylating (479 aa).

NADP(+) is bound by residues 10–15, 33–35, 75–77, and asparagine 103; these read GLAVMG, NRS, and IKA. Residues asparagine 103 and 129–131 contribute to the substrate site; that span reads SGG. Lysine 183 (proton acceptor) is an active-site residue. 186–187 is a binding site for substrate; it reads HN. Glutamate 190 acts as the Proton donor in catalysis. Substrate contacts are provided by tyrosine 191, lysine 260, arginine 287, arginine 447, and histidine 453.

It belongs to the 6-phosphogluconate dehydrogenase family. In terms of assembly, homodimer.

It carries out the reaction 6-phospho-D-gluconate + NADP(+) = D-ribulose 5-phosphate + CO2 + NADPH. It participates in carbohydrate degradation; pentose phosphate pathway; D-ribulose 5-phosphate from D-glucose 6-phosphate (oxidative stage): step 3/3. Functionally, catalyzes the oxidative decarboxylation of 6-phosphogluconate to ribulose 5-phosphate and CO(2), with concomitant reduction of NADP to NADPH. This is 6-phosphogluconate dehydrogenase, decarboxylating (gnd) from Chlamydia muridarum (strain MoPn / Nigg).